A 102-amino-acid chain; its full sequence is Co-chaperonin GroES (102 aa).

The protein belongs to the GroES chaperonin family. Heptamer of 7 subunits arranged in a ring. Interacts with the chaperonin GroEL.

It is found in the cytoplasm. Together with the chaperonin GroEL, plays an essential role in assisting protein folding. The GroEL-GroES system forms a nano-cage that allows encapsulation of the non-native substrate proteins and provides a physical environment optimized to promote and accelerate protein folding. GroES binds to the apical surface of the GroEL ring, thereby capping the opening of the GroEL channel. In Chlamydia trachomatis serovar L2 (strain ATCC VR-902B / DSM 19102 / 434/Bu), this protein is Co-chaperonin GroES.